The following is a 408-amino-acid chain: 2,3-bisphosphoglycerate-independent phosphoglycerate mutase 1 (408 aa).

Belongs to the BPG-independent phosphoglycerate mutase family. A-PGAM subfamily. As to quaternary structure, monomer. Requires Mn(2+) as cofactor.

It catalyses the reaction (2R)-2-phosphoglycerate = (2R)-3-phosphoglycerate. It functions in the pathway carbohydrate degradation; glycolysis; pyruvate from D-glyceraldehyde 3-phosphate: step 3/5. Catalyzes the interconversion of 2-phosphoglycerate and 3-phosphoglycerate. This Archaeoglobus fulgidus (strain ATCC 49558 / DSM 4304 / JCM 9628 / NBRC 100126 / VC-16) protein is 2,3-bisphosphoglycerate-independent phosphoglycerate mutase 1 (apgM1).